The following is a 668-amino-acid chain: DNA ligase (668 aa).

Residues 35–39 (DKEYD) and 83–84 (SL) contribute to the NAD(+) site. Lysine 125 (N6-AMP-lysine intermediate) is an active-site residue. NAD(+) contacts are provided by arginine 147, glutamate 181, and lysine 317. Positions 410, 413, 426, and 432 each coordinate Zn(2+). The BRCT domain occupies 591–668 (KKDNKFNGKT…TEEEFNEMIN (78 aa)).

The protein belongs to the NAD-dependent DNA ligase family. LigA subfamily. The cofactor is Mg(2+). It depends on Mn(2+) as a cofactor.

It catalyses the reaction NAD(+) + (deoxyribonucleotide)n-3'-hydroxyl + 5'-phospho-(deoxyribonucleotide)m = (deoxyribonucleotide)n+m + AMP + beta-nicotinamide D-nucleotide.. Its function is as follows. DNA ligase that catalyzes the formation of phosphodiester linkages between 5'-phosphoryl and 3'-hydroxyl groups in double-stranded DNA using NAD as a coenzyme and as the energy source for the reaction. It is essential for DNA replication and repair of damaged DNA. This chain is DNA ligase, found in Clostridium tetani (strain Massachusetts / E88).